We begin with the raw amino-acid sequence, 368 residues long: 3-isopropylmalate dehydrogenase (368 aa).

Residue 80-93 participates in NAD(+) binding; that stretch reads GPKWDNLEFSKKPE. Substrate is bound by residues R100, R110, R138, and D229. Mg(2+) is bound by residues D229, D253, and D257. 292–304 contacts NAD(+); sequence GSAPDIAGKEIAN.

The protein belongs to the isocitrate and isopropylmalate dehydrogenases family. LeuB type 1 subfamily. In terms of assembly, homodimer. It depends on Mg(2+) as a cofactor. Requires Mn(2+) as cofactor.

The protein localises to the cytoplasm. The enzyme catalyses (2R,3S)-3-isopropylmalate + NAD(+) = 4-methyl-2-oxopentanoate + CO2 + NADH. It functions in the pathway amino-acid biosynthesis; L-leucine biosynthesis; L-leucine from 3-methyl-2-oxobutanoate: step 3/4. Catalyzes the oxidation of 3-carboxy-2-hydroxy-4-methylpentanoate (3-isopropylmalate) to 3-carboxy-4-methyl-2-oxopentanoate. The product decarboxylates to 4-methyl-2 oxopentanoate. The chain is 3-isopropylmalate dehydrogenase from Pelagibacter ubique (strain HTCC1062).